The sequence spans 298 residues: MKTLQSTLLLLLLVPLIKPAPPTQQDSRIIYDYGTDNFEESIFSQDYEDKYLDGKNIKEKETVIIPNEKSLQLQKDEAITPLPPKKENDEMPTCLLCVCLSGSVYCEEVDIDAVPPLPKESAYLYARFNKIKKLTAKDFADIPNLRRLDFTGNLIEDIEDGTFSKLSLLEELSLAENQLLKLPVLPPKLTLFNAKYNKIKSRGIKANAFKKLNNLTFLYLDHNALESVPLNLPESLRVIHLQFNNIASITDDTFCKANDTSYIRDRIEEIRLEGNPIVLGKHPNSFICLKRLPIGSYF.

An N-terminal signal peptide occupies residues 1–20 (MKTLQSTLLLLLLVPLIKPA). A glycan (O-linked (GalNAc...) threonine) is linked at threonine 80. N-linked (GlcNAc...) (keratan sulfate) asparagine glycosylation is present at asparagine 88. LRR repeat units follow at residues 112 to 131 (DAVP…FNKI), 132 to 155 (KKLT…GNLI), 156 to 179 (EDIE…ENQL), 180 to 199 (LKLP…YNKI), 200 to 225 (KSRG…HNAL), 226 to 246 (ESVP…FNNI), and 247 to 277 (ASIT…GNPI). Residue asparagine 214 is glycosylated (N-linked (GlcNAc...) (keratan sulfate) asparagine). A disulfide bridge connects residues cysteine 255 and cysteine 288. A glycan (N-linked (GlcNAc...) (keratan sulfate) asparagine) is linked at asparagine 258.

Belongs to the small leucine-rich proteoglycan (SLRP) family. SLRP class III subfamily. Post-translationally, O-glycosylated with a core 1 or possibly core 8 glycan. Contains keratan sulfate. In terms of tissue distribution, bone.

The protein localises to the secreted. It is found in the extracellular space. Its subcellular location is the extracellular matrix. Its function is as follows. Induces bone formation in conjunction with TGF-beta-1 or TGF-beta-2. The sequence is that of Mimecan (OGN) from Homo sapiens (Human).